The primary structure comprises 67 residues: Large ribosomal subunit protein bL35 (67 aa).

The interval Lys21–Met50 is disordered. Positions Asn28–Asn44 are enriched in basic residues.

Belongs to the bacterial ribosomal protein bL35 family.

The protein is Large ribosomal subunit protein bL35 of Gluconobacter oxydans (strain 621H) (Gluconobacter suboxydans).